Reading from the N-terminus, the 146-residue chain is Nucleoside diphosphate kinase (146 aa).

ATP contacts are provided by Lys11, Phe59, Arg87, Thr93, Arg104, and Asn114. His117 (pros-phosphohistidine intermediate) is an active-site residue.

It belongs to the NDK family. As to quaternary structure, homotetramer. The cofactor is Mg(2+).

It localises to the cytoplasm. The enzyme catalyses a 2'-deoxyribonucleoside 5'-diphosphate + ATP = a 2'-deoxyribonucleoside 5'-triphosphate + ADP. The catalysed reaction is a ribonucleoside 5'-diphosphate + ATP = a ribonucleoside 5'-triphosphate + ADP. In terms of biological role, major role in the synthesis of nucleoside triphosphates other than ATP. The ATP gamma phosphate is transferred to the NDP beta phosphate via a ping-pong mechanism, using a phosphorylated active-site intermediate. The protein is Nucleoside diphosphate kinase of Anaplasma marginale (strain Florida).